The following is a 935-amino-acid chain: Isoleucine--tRNA ligase (935 aa).

The short motif at 58–68 (PYANGSIHVGH) is the 'HIGH' region element. Glutamate 558 is an L-isoleucyl-5'-AMP binding site. Positions 599–603 (KMSKS) match the 'KMSKS' region motif. Lysine 602 contacts ATP. Zn(2+) is bound by residues cysteine 897, cysteine 900, cysteine 917, and cysteine 920.

This sequence belongs to the class-I aminoacyl-tRNA synthetase family. IleS type 1 subfamily. In terms of assembly, monomer. Requires Zn(2+) as cofactor.

Its subcellular location is the cytoplasm. It carries out the reaction tRNA(Ile) + L-isoleucine + ATP = L-isoleucyl-tRNA(Ile) + AMP + diphosphate. In terms of biological role, catalyzes the attachment of isoleucine to tRNA(Ile). As IleRS can inadvertently accommodate and process structurally similar amino acids such as valine, to avoid such errors it has two additional distinct tRNA(Ile)-dependent editing activities. One activity is designated as 'pretransfer' editing and involves the hydrolysis of activated Val-AMP. The other activity is designated 'posttransfer' editing and involves deacylation of mischarged Val-tRNA(Ile). The sequence is that of Isoleucine--tRNA ligase from Francisella tularensis subsp. mediasiatica (strain FSC147).